Here is a 423-residue protein sequence, read N- to C-terminus: UPF0229 protein VV1_2091 (423 aa).

A disordered region spans residues 81–111; the sequence is QFITGDKIERPKGGQGGGGAGDGDASADGEG. Over residues 93–102 the composition is skewed to gly residues; it reads GGQGGGGAGD.

This sequence belongs to the UPF0229 family.

This chain is UPF0229 protein VV1_2091, found in Vibrio vulnificus (strain CMCP6).